Reading from the N-terminus, the 1897-residue chain is Spectinabilin polyketide synthase system protein NorA (1897 aa).

The Ketosynthase family 3 (KS3) domain maps to 112–536 (EEPIAIVGMG…GTNAHIILEQ (425 aa)). Catalysis depends on for beta-ketoacyl synthase activity residues Cys-283, His-418, and His-458. A disordered region spans residues 538 to 563 (APEPERPHAPEADGEPRPLPWPVSGH). Basic and acidic residues predominate over residues 540 to 553 (EPERPHAPEADGEP). Positions 644–962 (FVFPGQGSQW…VAEAHVHGVA (319 aa)) constitute a Malonyl-CoA:ACP transacylase (MAT) domain. An N-terminal hotdog fold region spans residues 1012-1139 (HPLLGAAIPL…GTLAPGGGHP (128 aa)). A PKS/mFAS DH domain is found at 1012–1289 (HPLLGAAIPL…MRPVTAEALH (278 aa)). The active-site Proton acceptor; for dehydratase activity is the His-1045. The interval 1113 to 1152 (SRPEDAGADEPWTRHAEGTLAPGGGHPRQDPGPWPPTGAR) is disordered. The C-terminal hotdog fold stretch occupies residues 1151–1289 (AREIDLDDCY…MRPVTAEALH (139 aa)). The active-site Proton donor; for dehydratase activity is Asp-1211. A Ketoreductase (KR) domain is found at 1494-1671 (GTVLVTGGLG…GVSMGWGMWA (178 aa)). The region spanning 1777–1852 (ALLLGVVRGH…ALSRYLRTLL (76 aa)) is the Carrier domain. Ser-1812 is modified (O-(pantetheine 4'-phosphoryl)serine). Positions 1854-1873 (PDPAPAPTAPDGQPGPDQAD) are disordered. Residues 1862–1871 (APDGQPGPDQ) are compositionally biased toward low complexity.

In terms of assembly, the spectinabilin polyketide synthase complex is composed of 4 proteins, NorA, NorA', NorB and NorC. The complex comprises 6 modules with a total of 28 catalytic domains catalyzing 7 chain elongations. NorA comprises one module, NorA' two modules, NorB one module and NorC two modules. Pantetheine 4'-phosphate serves as cofactor.

It catalyses the reaction 4-nitrobenzoyl-CoA + 6 (S)-methylmalonyl-CoA + malonyl-CoA + 6 NADPH + 12 H(+) = demethyldeoxyspectinabilin + 7 CO2 + 6 NADP(+) + 8 CoA + 5 H2O. The protein operates within antibiotic biosynthesis. It functions in the pathway polyketide biosynthesis. In terms of biological role, component of a type I modular polyketide synthase (PKS) that generates the backbone of the antibiotic spectinabilin (also known as neoaureothin), a nitroaryl-substituted polyketide metabolite. This PKS system accepts the unusual starter unit 4-nitrobenzoyl-CoA and extends it by 6 molecules of (S)-methylmalonyl-CoA and a single molecule of malonyl-CoA. The first module, NorA, is used twice in an iterative fashion. The polypeptide is Spectinabilin polyketide synthase system protein NorA (Streptomyces orinoci (Streptoverticillium orinoci)).